We begin with the raw amino-acid sequence, 443 residues long: GTPase Der (443 aa).

EngA-type G domains lie at 3-167 (PTLV…PEPE) and 176-349 (VRVA…AAAM). Residues 9–16 (GRPNVGKS), 56–60 (DTGGF), 119–122 (NKAE), 182–189 (GRPNVGKS), 229–233 (DTAGM), and 294–297 (NKWD) contribute to the GTP site. A KH-like domain is found at 350–434 (AKMTTPRLTR…PLRIQFVTAK (85 aa)).

Belongs to the TRAFAC class TrmE-Era-EngA-EngB-Septin-like GTPase superfamily. EngA (Der) GTPase family. As to quaternary structure, associates with the 50S ribosomal subunit.

GTPase that plays an essential role in the late steps of ribosome biogenesis. The sequence is that of GTPase Der from Dechloromonas aromatica (strain RCB).